Consider the following 315-residue polypeptide: ATP synthase gamma chain (315 aa).

This sequence belongs to the ATPase gamma chain family. As to quaternary structure, F-type ATPases have 2 components, CF(1) - the catalytic core - and CF(0) - the membrane proton channel. CF(1) has five subunits: alpha(3), beta(3), gamma(1), delta(1), epsilon(1). CF(0) has three main subunits: a, b and c.

Its subcellular location is the cellular thylakoid membrane. In terms of biological role, produces ATP from ADP in the presence of a proton gradient across the membrane. The gamma chain is believed to be important in regulating ATPase activity and the flow of protons through the CF(0) complex. The sequence is that of ATP synthase gamma chain from Cyanothece sp. (strain PCC 7425 / ATCC 29141).